Here is a 195-residue protein sequence, read N- to C-terminus: uncharacterized protein (195 aa).

This is an uncharacterized protein from Bacillus subtilis (strain 168).